Reading from the N-terminus, the 332-residue chain is SLAM family member 6 (332 aa).

The first 21 residues, 1–21 (MLWLFQSLLFVFCFGPGNVVS), serve as a signal peptide directing secretion. At 22–226 (QSSLTPLMVN…VKIQYTDTKM (205 aa)) the chain is on the extracellular side. The Ig-like V-type domain occupies 35–120 (GESVTLPLEF…ISTKTSAKLS (86 aa)). N58, N87, N137, N144, N161, N178, and N203 each carry an N-linked (GlcNAc...) asparagine glycan. The Ig-like C2-type domain occupies 132-209 (NIQVTNHSQL…AVSNLSFSVS (78 aa)). 2 cysteine pairs are disulfide-bonded: C147/C214 and C153/C195. The helical transmembrane segment at 227–247 (ILFMVSGICIVFGFIILLLLV) threads the bilayer. At 248–331 (LRKRRDSLSL…FSRATALDNV (84 aa)) the chain is on the cytoplasmic side. Y274 is modified (phosphotyrosine). S278 bears the Phosphoserine mark. 2 short sequence motifs (ITSM) span residues 283 to 288 (TVYASV) and 307 to 312 (TIYSTI). Y309 bears the Phosphotyrosine mark.

As to quaternary structure, homodimer. Interacts with PTN6. Interacts (phosphorylated) with PTN11. Interacts (phosphorylated on tyrosine residues) with SH2D1A/SAP and SH2D1B/EAT2; SH2D1A and SH2D1B can associate with the same SLAMF6 molecule; interaction with SH2D1B is mediated by ITSM 2. In terms of processing, phosphorylation in NK cells upon engagment by SLAMF6-expressing target cells is leading to receptor activation. Expressed by all (resting and activated) natural killer cells (NK), T- and B-lymphocytes. Increased surface expression on T-cells of systemic lupus erythematosus (SLE) patients.

Its subcellular location is the cell membrane. Functionally, self-ligand receptor of the signaling lymphocytic activation molecule (SLAM) family. SLAM receptors triggered by homo- or heterotypic cell-cell interactions are modulating the activation and differentiation of a wide variety of immune cells and thus are involved in the regulation and interconnection of both innate and adaptive immune response. Activities are controlled by presence or absence of small cytoplasmic adapter proteins, SH2D1A/SAP and/or SH2D1B/EAT-2. Triggers cytolytic activity only in natural killer cells (NK) expressing high surface densities of natural cytotoxicity receptors. Positive signaling in NK cells implicates phosphorylation of VAV1. NK cell activation seems to depend on SH2D1B and not on SH2D1A. In conjunction with SLAMF1 controls the transition between positive selection and the subsequent expansion and differentiation of the thymocytic natural killer T (NKT) cell lineage. Promotes T-cell differentiation into a helper T-cell Th17 phenotype leading to increased IL-17 secretion; the costimulatory activity requires SH2D1A. Promotes recruitment of RORC to the IL-17 promoter. In conjunction with SLAMF1 and CD84/SLAMF5 may be a negative regulator of the humoral immune response. In the absence of SH2D1A/SAP can transmit negative signals to CD4(+) T-cells and NKT cells. Negatively regulates germinal center formation by inhibiting T-cell:B-cell adhesion; the function probably implicates increased association with PTPN6/SHP-1 via ITSMs in absence of SH2D1A/SAP. However, reported to be involved in maintaining B-cell tolerance in germinal centers and in preventing autoimmunity. In Homo sapiens (Human), this protein is SLAM family member 6 (SLAMF6).